Consider the following 112-residue polypeptide: Small ribosomal subunit protein bS6 (112 aa).

The protein belongs to the bacterial ribosomal protein bS6 family.

Its function is as follows. Binds together with bS18 to 16S ribosomal RNA. In Azobacteroides pseudotrichonymphae genomovar. CFP2, this protein is Small ribosomal subunit protein bS6.